Reading from the N-terminus, the 202-residue chain is Cytochrome c oxidase assembly protein CtaG (202 aa).

Residues Met-1–Arg-13 lie on the Cytoplasmic side of the membrane. The chain crosses the membrane as a helical; Signal-anchor for type II membrane protein span at residues Asn-14–Ala-36. Topologically, residues Val-37 to Leu-202 are periplasmic. Residues Glu-183–Leu-202 are disordered.

The protein belongs to the COX11/CtaG family.

The protein localises to the cell inner membrane. In terms of biological role, exerts its effect at some terminal stage of cytochrome c oxidase synthesis, probably by being involved in the insertion of the copper B into subunit I. The polypeptide is Cytochrome c oxidase assembly protein CtaG (Rhizobium etli (strain CIAT 652)).